The sequence spans 383 residues: MVQLLHSIKAHNDKVWSVSVHPTLPIIATASTDKSTKLYKLSARQKFPLVAKLEDTHKRSIRSVAFKPPLGGADTPKSDFLDLPALAAGSFDSTISVWGIDEPDVEYDIEEVIANQKEILTSPNNEWNLMAIIEGHENEVKAVDWNFQGQYLASCSRDKTVWIWETDPETLEEFECVAVLNDHSQDVKNVSWHPSMNILASSSYDDTIRIYQQDIAGDEWSCVGILNGHEGTVWCSKFESLKSPIADSSVLRLVSASDDLSVRIWVAKREQEDDEQAKLELPSSIRHTNEMVWEVESVLPSVHKYPVYSVAWSALTGKIASAGSDGKIVVYSETEKGKWVIDSIHEGAHGVHEINCVIWAQLDDENEILVSAGDDGYVNLWKI.

WD repeat units follow at residues 10 to 49, 56 to 108, 135 to 175, 182 to 221, 228 to 275, 302 to 341, and 349 to 383; these read AHND…KFPL, THKR…VEYD, GHEN…EEFE, DHSQ…DEWS, GHEG…EDDE, VHKY…KWVI, and HGVH…LWKI.

Belongs to the WD repeat CIA1 family. In terms of assembly, interacts with NAR1.

The protein resides in the cytoplasm. The protein localises to the nucleus. Essential component of the cytosolic iron-sulfur (Fe/S) protein assembly machinery. Required for the maturation of extramitochondrial Fe/S proteins. The protein is Probable cytosolic iron-sulfur protein assembly protein 1 of Candida albicans (strain SC5314 / ATCC MYA-2876) (Yeast).